Reading from the N-terminus, the 424-residue chain is Calreticulin (424 aa).

A signal peptide spans 1 to 29; that stretch reads MAIRARSSSYAAAAVALALALASVAAVAG. N-linked (GlcNAc...) asparagine glycosylation occurs at Asn-61. Cys-115 and Cys-147 are joined by a disulfide. An alpha-D-glucoside-binding residues include Tyr-119, Lys-121, Tyr-138, and Asp-145. Repeat copies occupy residues 201 to 212, 220 to 231, 237 to 248, 255 to 266, 270 to 280, 284 to 294, and 298 to 308. A 4 X approximate repeats region spans residues 201-266; sequence KQSGSIYEHW…DAKKPEDWDD (66 aa). The span at 217–262 shows a compositional bias: basic and acidic residues; that stretch reads QIKDPEAKKPEDWDDKEYIPDPEDKKPEGYDDIPKEIPDPDAKKPE. The tract at residues 217–289 is disordered; sequence QIKDPEAKKP…PEYKGPWKQK (73 aa). Residues 270–308 are 3 X approximate repeats; that stretch reads GEWTAPTIPNPEYKGPWKQKKIKNPNYQGKWKAPMIDNP. Residue Glu-328 participates in an alpha-D-glucoside binding. Positions 356–385 are enriched in basic and acidic residues; that stretch reads ETWGKHKDAEKAAFDEAEKKKEEEEAAKAG. The segment at 356 to 424 is disordered; it reads ETWGKHKDAE…DSDDEKHDEL (69 aa). The segment covering 386–401 has biased composition (acidic residues); the sequence is EDDDDLDDEDAEDEDK. Basic and acidic residues predominate over residues 402–424; it reads ADEKADSDAEDGKDSDDEKHDEL. Residues 421-424 carry the Prevents secretion from ER motif; sequence HDEL.

The protein belongs to the calreticulin family. Phosphorylated.

It localises to the endoplasmic reticulum lumen. In terms of biological role, molecular calcium-binding chaperone promoting folding, oligomeric assembly and quality control in the ER via the calreticulin/calnexin cycle. This lectin may interact transiently with almost all of the monoglucosylated glycoproteins that are synthesized in the ER. The sequence is that of Calreticulin from Oryza sativa subsp. japonica (Rice).